Reading from the N-terminus, the 249-residue chain is Phosphatidylglycerol--prolipoprotein diacylglyceryl transferase (249 aa).

Helical transmembrane passes span 11–31 (LKIYGYGAMIALGILAAVILL), 49–69 (AIVGIIGGILGGKLLYIIVDI), 82–102 (LGNGFVIYGAIIGGAISVYLY), 116–136 (LVVPSVALAQGFGRIGCFLAG), 163–183 (LHPTQIYSSIFDFLLAFFLLW), 192–212 (GRVFSLYVIIYGVGRVIVEFL), and 223–243 (LSTSQFISLFTIIIGIFVFNI). Arg129 contributes to the a 1,2-diacyl-sn-glycero-3-phospho-(1'-sn-glycerol) binding site.

Belongs to the Lgt family.

It is found in the cell membrane. It catalyses the reaction L-cysteinyl-[prolipoprotein] + a 1,2-diacyl-sn-glycero-3-phospho-(1'-sn-glycerol) = an S-1,2-diacyl-sn-glyceryl-L-cysteinyl-[prolipoprotein] + sn-glycerol 1-phosphate + H(+). It functions in the pathway protein modification; lipoprotein biosynthesis (diacylglyceryl transfer). In terms of biological role, catalyzes the transfer of the diacylglyceryl group from phosphatidylglycerol to the sulfhydryl group of the N-terminal cysteine of a prolipoprotein, the first step in the formation of mature lipoproteins. The sequence is that of Phosphatidylglycerol--prolipoprotein diacylglyceryl transferase from Clostridium tetani (strain Massachusetts / E88).